A 100-amino-acid polypeptide reads, in one-letter code: Integration host factor subunit alpha (100 aa).

The protein belongs to the bacterial histone-like protein family. Heterodimer of an alpha and a beta chain.

Functionally, this protein is one of the two subunits of integration host factor, a specific DNA-binding protein that functions in genetic recombination as well as in transcriptional and translational control. The sequence is that of Integration host factor subunit alpha from Erythrobacter litoralis (strain HTCC2594).